Reading from the N-terminus, the 275-residue chain is MAIVKCKPTSPGRRHVVKVVNSDLHKGKPYAPLLEKKSKSGGRNNNGRITVRHIGGGNKQHYRLIDFKRTKDGIPAKVERLEYDPNRSANIALVLYADGERRYIIAPKGVSAGDMIQSGEDAAIKVGNTLPMRNIPVGSTVHCVELKPGKGAQLARSAGAYAQIIARTGTYVTLRLRSGEMRKVLSECRATLGEVGNSEHMLRELGKAGASRWRGIRPTVRGVVMNPVDHPHGGGEGRTSGGRHPVSPWGVPTKGYKTRSNKRTDKYIVRSRNKK.

Disordered stretches follow at residues 28-48 and 223-275; these read KPYA…NNGR and VVMN…RNKK.

This sequence belongs to the universal ribosomal protein uL2 family. Part of the 50S ribosomal subunit. Forms a bridge to the 30S subunit in the 70S ribosome.

Its function is as follows. One of the primary rRNA binding proteins. Required for association of the 30S and 50S subunits to form the 70S ribosome, for tRNA binding and peptide bond formation. It has been suggested to have peptidyltransferase activity; this is somewhat controversial. Makes several contacts with the 16S rRNA in the 70S ribosome. In Photobacterium profundum (strain SS9), this protein is Large ribosomal subunit protein uL2.